Here is a 1025-residue protein sequence, read N- to C-terminus: Kinesin-like protein KIN-14P (1025 aa).

Disordered regions lie at residues 1-87 (MNPM…MHHG) and 263-286 (YSQI…NEEE). Residues 15–28 (STPRSPFSPFSPLS) are compositionally biased toward low complexity. Residues 29 to 41 (VDDRHRNHADTKT) are compositionally biased toward basic and acidic residues. Residues 42–53 (PRSPFSPFSPLS) are compositionally biased toward low complexity. A compositionally biased stretch (polar residues) spans 65–75 (KFQQALASSGQ). Positions 203–425 (HEIATQQLRQ…REMEKKSESN (223 aa)) form a coiled coil. The segment covering 270–286 (TKTEKSKWEEQKKNEEE) has biased composition (basic and acidic residues). The region spanning 509–838 (NIRVFCRVRP…LKFAERVSGV (330 aa)) is the Kinesin motor domain. ATP is bound at residue 593–600 (GQTGSGKT). Positions 847–879 (KEGKDVRDLMEQLASLKDTIARKDEEIERLQHQ) form a coiled coil. Disordered stretches follow at residues 881–926 (QRLQ…SAEA), 939–977 (AASM…RPLD), and 994–1025 (TGLT…KRWA). 2 stretches are compositionally biased toward polar residues: residues 901–913 (SDTG…SRYS) and 939–948 (AASMGTQGSI). The span at 950–962 (VTKRPPRISDRAK) shows a compositional bias: basic and acidic residues. Composition is skewed to low complexity over residues 963-974 (SVTAKSSTSVTR) and 998-1016 (SSSK…STSS).

The protein belongs to the TRAFAC class myosin-kinesin ATPase superfamily. Kinesin family. KIN-14 subfamily.

In Arabidopsis thaliana (Mouse-ear cress), this protein is Kinesin-like protein KIN-14P.